Here is a 231-residue protein sequence, read N- to C-terminus: Cytidylate kinase (231 aa).

Position 18-26 (glycine 18–serine 26) interacts with ATP.

It belongs to the cytidylate kinase family. Type 1 subfamily.

It localises to the cytoplasm. The enzyme catalyses CMP + ATP = CDP + ADP. It catalyses the reaction dCMP + ATP = dCDP + ADP. The polypeptide is Cytidylate kinase (Streptomyces avermitilis (strain ATCC 31267 / DSM 46492 / JCM 5070 / NBRC 14893 / NCIMB 12804 / NRRL 8165 / MA-4680)).